The following is a 561-amino-acid chain: Serine palmitoyltransferase 2 (561 aa).

The chain crosses the membrane as a helical span at residues 57-77; that stretch reads PYYISLLTYLNYLILIILGHV. The residue at position 366 (K366) is an N6-(pyridoxal phosphate)lysine. A helical transmembrane segment spans residues 443–463; sequence LGFIVYGVADSPVIPLLLYCP.

The protein belongs to the class-II pyridoxal-phosphate-dependent aminotransferase family. In terms of assembly, LCB1 and LCB2 encode essential subunits of the enzyme and form a heterodimer. Component of the SPOTS complex, at least composed of LCB1/2 (LCB1 and/or LCB2), ORM1/2 (ORM1 and/or ORM2), SAC1 and TSC3. Interacts with LCB1 and TSC3. It depends on pyridoxal 5'-phosphate as a cofactor.

It is found in the cytoplasm. It localises to the endoplasmic reticulum. Its subcellular location is the membrane. The catalysed reaction is L-serine + hexadecanoyl-CoA + H(+) = 3-oxosphinganine + CO2 + CoA. It functions in the pathway lipid metabolism; sphingolipid metabolism. Functionally, catalytic subunit of serine palmitoyltransferase (SPT), which catalyzes the committed step in the synthesis of sphingolipids, the condensation of serine with palmitoyl CoA to form the long chain base 3-ketosphinganine. The protein is Serine palmitoyltransferase 2 (LCB2) of Saccharomyces cerevisiae (strain ATCC 204508 / S288c) (Baker's yeast).